A 156-amino-acid chain; its full sequence is Ribosomal RNA large subunit methyltransferase H (156 aa).

Residues L73, G104, and 123-128 (LSDLTL) each bind S-adenosyl-L-methionine.

This sequence belongs to the RNA methyltransferase RlmH family. In terms of assembly, homodimer.

It is found in the cytoplasm. The catalysed reaction is pseudouridine(1915) in 23S rRNA + S-adenosyl-L-methionine = N(3)-methylpseudouridine(1915) in 23S rRNA + S-adenosyl-L-homocysteine + H(+). Functionally, specifically methylates the pseudouridine at position 1915 (m3Psi1915) in 23S rRNA. This chain is Ribosomal RNA large subunit methyltransferase H, found in Leptothrix cholodnii (strain ATCC 51168 / LMG 8142 / SP-6) (Leptothrix discophora (strain SP-6)).